Consider the following 331-residue polypeptide: MAVFTAVSDADLALWMRHYDLGDVVAFRGIPSGIENSNFFLTTTHGEYVLTIFENLTAGQLPFYIDLMSHLAKHGVPVPAPVARDDGTLFGELHGKPAAIVTKLEGAAELAPGIEHCVEVGQMLARMHLAGRDYPQHQPNLRSLPWWRDAVPAIVPFITGEQRALLEGELAHQAAFFASDDYAALPEGPCHCDLFRDNALFAHAAPDTGHSVRLGGFFDFYFAGCDKWLFDVAVTVNDWCVDLSTGALDAGRADALLRAYQTVRPFTTGERRHWGDMLRAGAYRFWVSRLYDFHLPRAAQMLKPHDPGHFERILRERIAHAGALPETHACN.

It belongs to the pseudomonas-type ThrB family.

The catalysed reaction is L-homoserine + ATP = O-phospho-L-homoserine + ADP + H(+). It participates in amino-acid biosynthesis; L-threonine biosynthesis; L-threonine from L-aspartate: step 4/5. The chain is Homoserine kinase from Burkholderia thailandensis (strain ATCC 700388 / DSM 13276 / CCUG 48851 / CIP 106301 / E264).